Consider the following 339-residue polypeptide: Protoheme IX farnesyltransferase (339 aa).

Residues 1 to 27 (MTVADPRLTDAPAHSRTSLLGRRRGGR) form a disordered region. Helical transmembrane passes span 45-65 (IVELLLITTIPVMLFAAGGLP), 67-87 (GWLILTTFVGGALAAGCANTL), 117-136 (ALVFATVLGIASTAIFVAFV), 140-159 (SAALALGAILLYVVGYTLLL), 165-185 (QNIVWGGVAGCMQVLIGWTAV), 191-211 (WAPFVLFGVIFLWTPPHYWPL), 236-256 (VSRQIVLYTIAMVLCSLLLVP), 257-277 (LGGAGVVYGAAALVLGIGFLV), and 309-329 (PMGVFHGSITYLTLLSAAVAV).

Belongs to the UbiA prenyltransferase family. Protoheme IX farnesyltransferase subfamily.

The protein localises to the cell membrane. It carries out the reaction heme b + (2E,6E)-farnesyl diphosphate + H2O = Fe(II)-heme o + diphosphate. It participates in porphyrin-containing compound metabolism; heme O biosynthesis; heme O from protoheme: step 1/1. Its function is as follows. Converts heme B (protoheme IX) to heme O by substitution of the vinyl group on carbon 2 of heme B porphyrin ring with a hydroxyethyl farnesyl side group. In Kineococcus radiotolerans (strain ATCC BAA-149 / DSM 14245 / SRS30216), this protein is Protoheme IX farnesyltransferase.